We begin with the raw amino-acid sequence, 3083 residues long: Laminin subunit alpha-1 (3083 aa).

The N-terminal stretch at 1–24 (MRGSGTGAALLVLLASVLWVTVRS) is a signal peptide. Residue glutamine 25 is modified to Pyrrolidone carboxylic acid. Residues 25–276 (QQRGLFPAIL…SIKDISVGGM (252 aa)) form the Laminin N-terminal domain. 6 cysteine pairs are disulfide-bonded: cysteine 277–cysteine 286, cysteine 279–cysteine 297, cysteine 299–cysteine 308, cysteine 311–cysteine 331, cysteine 334–cysteine 343, and cysteine 336–cysteine 368. 4 consecutive Laminin EGF-like domains span residues 277 to 333 (CICY…ECEE), 334 to 403 (CNCH…PCRP), 404 to 460 (CNCD…NCIP), and 461 to 509 (CDCR…GCSE). N-linked (GlcNAc...) asparagine glycosylation is present at asparagine 370. Disulfide bonds link cysteine 371–cysteine 380, cysteine 383–cysteine 401, cysteine 404–cysteine 416, cysteine 406–cysteine 434, cysteine 436–cysteine 445, cysteine 448–cysteine 458, cysteine 461–cysteine 474, cysteine 463–cysteine 478, cysteine 480–cysteine 489, and cysteine 492–cysteine 507. A Laminin EGF-like 5; first part domain is found at 510–519 (CFCFGVSGVC). Residues 523 to 715 (TWSISQVTNM…DLAVAADVEH (193 aa)) enclose the Laminin IV type A 1 domain. A glycan (N-linked (GlcNAc...) asparagine) is linked at asparagine 672. One can recognise a Laminin EGF-like 5; second part domain in the interval 716–748 (CECPQGYTGTSCEACLPGYYRVDGILFGGICQP). Disulfide bonds link cysteine 749/cysteine 758, cysteine 751/cysteine 764, cysteine 767/cysteine 776, cysteine 779/cysteine 795, cysteine 798/cysteine 813, cysteine 800/cysteine 823, cysteine 826/cysteine 835, cysteine 838/cysteine 853, cysteine 856/cysteine 870, cysteine 858/cysteine 877, cysteine 880/cysteine 889, cysteine 892/cysteine 906, cysteine 909/cysteine 921, cysteine 911/cysteine 928, cysteine 930/cysteine 939, cysteine 942/cysteine 955, cysteine 958/cysteine 970, cysteine 960/cysteine 976, cysteine 978/cysteine 987, cysteine 990/cysteine 1002, cysteine 1005/cysteine 1014, cysteine 1007/cysteine 1021, cysteine 1023/cysteine 1032, cysteine 1035/cysteine 1048, cysteine 1051/cysteine 1063, cysteine 1053/cysteine 1070, cysteine 1072/cysteine 1081, cysteine 1084/cysteine 1094, cysteine 1097/cysteine 1109, cysteine 1099/cysteine 1125, cysteine 1127/cysteine 1136, and cysteine 1139/cysteine 1154. 8 Laminin EGF-like domains span residues 749-797 (CECH…DCQP), 798-855 (CACP…TCVP), 856-908 (CNCS…NCRA), 909-957 (CDCH…GCVP), 958-1004 (CNCS…GCTP), 1005-1050 (CDCA…GCQA), 1051-1096 (CNCS…DCVP), and 1097-1156 (CGCD…GCSP). The short motif at 1147–1149 (RGD) is the Cell attachment site element. In terms of domain architecture, Laminin EGF-like 14; first part spans 1157 to 1166 (CFCFGLSQLC). The Laminin IV type A 2 domain occupies 1177 to 1368 (ITLASDQPLL…EGEAALLLEL (192 aa)). Residue asparagine 1344 is glycosylated (N-linked (GlcNAc...) asparagine). The Laminin EGF-like 14; second part domain occupies 1369-1409 (CVCPPGTAGHSCQDCAPGYYREKLPESGGRGPRPLLAPCVP). Intrachain disulfides connect cysteine 1410–cysteine 1419, cysteine 1412–cysteine 1426, cysteine 1429–cysteine 1438, cysteine 1441–cysteine 1456, cysteine 1459–cysteine 1473, cysteine 1461–cysteine 1483, cysteine 1486–cysteine 1495, cysteine 1498–cysteine 1513, cysteine 1516–cysteine 1528, cysteine 1518–cysteine 1535, cysteine 1537–cysteine 1546, and cysteine 1549–cysteine 1560. Laminin EGF-like domains follow at residues 1410–1458 (CNCN…DCTP), 1459–1515 (CTCP…SCQT), and 1516–1562 (CDCN…DCVS). Residues 1564-2123 (DDDCVGPLLN…SRARKQVASI (560 aa)) form a domain II and I region. Positions 1617–1691 (AKKIRAEIQL…VATLNQTARK (75 aa)) form a coiled coil. Asparagine 1659, asparagine 1686, asparagine 1718, asparagine 1725, asparagine 1763, and asparagine 1811 each carry an N-linked (GlcNAc...) asparagine glycan. Positions 1723 to 1809 (QQNATLELKA…QEKKLRVQEE (87 aa)) form a coiled coil. Residues 1868 to 1901 (KRRARDLVHRAEQHASELQSRAGALDRDLENVRN) are a coiled coil. Residues asparagine 1935, asparagine 2026, asparagine 2045, and asparagine 2066 are each glycosylated (N-linked (GlcNAc...) asparagine). 5 Laminin G-like domains span residues 2124–2304 (KVAV…CNGC), 2312–2488 (DSSF…RKGC), 2493–2679 (IQSV…LDTC), 2721–2893 (AHQF…VDRC), and 2898–3078 (QEGT…PHSC). A disulfide bridge connects residues cysteine 2278 and cysteine 2304. N-linked (GlcNAc...) asparagine glycosylation occurs at asparagine 2355. 2 disulfides stabilise this stretch: cysteine 2464-cysteine 2488 and cysteine 2652-cysteine 2679. Asparagine 2834 carries an N-linked (GlcNAc...) asparagine glycan. Cysteine 2868 and cysteine 2893 are joined by a disulfide. N-linked (GlcNAc...) asparagine glycosylation occurs at asparagine 2923. A disulfide bond links cysteine 3047 and cysteine 3078.

In terms of assembly, laminin is a complex glycoprotein, consisting of three different polypeptide chains (alpha, beta, gamma), which are bound to each other by disulfide bonds into a cross-shaped molecule comprising one long and three short arms with globules at each end. Alpha-1 is a subunit of laminin-1 (laminin-111 or EHS laminin) and laminin-3 (laminin-121 or S-laminin). Post-translationally, tyrosine phosphorylated by PKDCC/VLK.

It localises to the secreted. It is found in the extracellular space. The protein localises to the extracellular matrix. The protein resides in the basement membrane. Functionally, binding to cells via a high affinity receptor, laminin is thought to mediate the attachment, migration and organization of cells into tissues during embryonic development by interacting with other extracellular matrix components. This Mus musculus (Mouse) protein is Laminin subunit alpha-1 (Lama1).